We begin with the raw amino-acid sequence, 225 residues long: MKNLYKWPAAQSLYPNQGKKSYAGKRFRYRLRSWLHHSKIKQFEQFVTQNPQLIPLLNARPNYSYPVAHRFLDKRFSAKQRLQKITDNLLFLPQKLAHLPPLWEQAVNFGEIIADFELWLNINEHQPMEGFWALELRHRPTNQLVYLLTFGKLDEALLIAVIQGPNFEGSKELVKQLTKSCHGLRPAYLMVETMKALTAVLGYQSLLGIPQKYQNKSAGCKVSAM.

This sequence to H.influenzae HI_1119.

It localises to the cell membrane. The sequence is that of Membrane protein LapB (lapB) from Mannheimia haemolytica (Pasteurella haemolytica).